The following is a 1330-amino-acid chain: pre-mRNA 3' end processing protein WDR33 (1330 aa).

Alanine 2 carries the N-acetylalanine modification. The residue at position 7 (serine 7) is a Phosphoserine. The residue at position 46 (lysine 46) is an N6-acetyllysine. WD repeat units lie at residues 117-156, 159-198, 200-239, 242-283, 286-325, 329-369, and 373-412; these read KVKC…FETI, AHDS…VKMF, AHKE…EERI, GHGA…SLAT, AHKN…EELQ, GHKK…EVGG, and AHEG…DKMR. Glycyl lysine isopeptide (Lys-Gly) (interchain with G-Cter in SUMO2) cross-links involve residues lysine 526, lysine 530, and lysine 560. The tract at residues 566–1330 is disordered; the sequence is QKQADQIQPP…GTSRGSGRGR (765 aa). Positions 588–607 are enriched in polar residues; it reads FSGQGPISQIPQGFQQPHPS. Positions 617–769 constitute a Collagen-like domain; that stretch reads GPPGPQGQFR…GPASQGIQGP (153 aa). Residues 622–642 are compositionally biased toward low complexity; it reads QGQFRAPGPQGQMGPQGPPMH. The span at 682–694 shows a compositional bias: pro residues; it reads PHGPLGPQGPPGP. Composition is skewed to low complexity over residues 695–706 and 725–750; these read QGSSGPQGHMGP and QGHM…GMQG. Arginine 776 carries the omega-N-methylarginine modification. The span at 848-863 shows a compositional bias: low complexity; that stretch reads GPSGSQGQQGPPQGSL. The residue at position 909 (arginine 909) is an Asymmetric dimethylarginine. The span at 926–935 shows a compositional bias: low complexity; the sequence is PGLGQQGAQG. Basic and acidic residues-rich tracts occupy residues 965–983 and 992–1027; these read SERR…DRGP and GPPD…EFEG. Arginine 981 carries the post-translational modification Omega-N-methylarginine. Position 1028 is an omega-N-methylarginine (arginine 1028). Basic and acidic residues-rich tracts occupy residues 1049 to 1061 and 1071 to 1115; these read PDHR…DGRG and EGRR…RGRD. Acidic residues predominate over residues 1123 to 1133; that stretch reads FGPEEGFDASD. Composition is skewed to basic and acidic residues over residues 1134-1143, 1163-1211, and 1236-1253; these read EAARGRDLRG, EFPR…RERS, and SEHR…DRGS. A Phosphoserine modification is found at serine 1204. At arginine 1256 the chain carries Omega-N-methylarginine. Positions 1275 to 1287 are enriched in basic and acidic residues; it reads DGDHHDGYHRDEP. A compositionally biased stretch (low complexity) spans 1293-1323; that stretch reads GSSSSSRGARSGSNWGRGSNMNSGPPRRGTS. The residue at position 1309 (arginine 1309) is an Asymmetric dimethylarginine; alternate. Residue arginine 1309 is modified to Omega-N-methylarginine; alternate.

The protein belongs to the WD repeat WDR33 family. As to quaternary structure, component of the cleavage and polyadenylation specificity factor (CPSF) module of the pre-mRNA 3'-end processing complex. Interacts with CPSF3/CPSF73. Most highly expressed in testis.

The protein localises to the nucleus. In terms of biological role, essential for both cleavage and polyadenylation of pre-mRNA 3' ends. This chain is pre-mRNA 3' end processing protein WDR33 (Wdr33), found in Mus musculus (Mouse).